A 428-amino-acid chain; its full sequence is Ectonucleoside triphosphate diphosphohydrolase 5 (428 aa).

The first 24 residues, 1–24 (MTSSRLPVLLALVFSSLSPVLSHS), serve as a signal peptide directing secretion. Glu172 serves as the catalytic Proton acceptor. Asn232 carries an N-linked (GlcNAc...) asparagine glycan. 2 disulfides stabilise this stretch: Cys272/Cys303 and Cys363/Cys377.

This sequence belongs to the GDA1/CD39 NTPase family. Monomer; active form. Homodimer; disulfide-linked. Homodimers are enzymatically inactive. Ca(2+) is required as a cofactor. Mg(2+) serves as cofactor.

The protein resides in the endoplasmic reticulum. Its subcellular location is the secreted. The catalysed reaction is a ribonucleoside 5'-diphosphate + H2O = a ribonucleoside 5'-phosphate + phosphate + H(+). It carries out the reaction GDP + H2O = GMP + phosphate + H(+). It catalyses the reaction UDP + H2O = UMP + phosphate + H(+). The enzyme catalyses IDP + H2O = IMP + phosphate + H(+). The catalysed reaction is CDP + H2O = CMP + phosphate + H(+). It carries out the reaction ADP + H2O = AMP + phosphate + H(+). Its pathway is protein modification; protein glycosylation. Hydrolyzes nucleoside diphosphates with a preference for GDP, IDP and UDP compared to ADP and CDP. In the lumen of the endoplasmic reticulum, hydrolyzes UDP that acts as an end-product feedback inhibitor of the UDP-Glc:glycoprotein glucosyltransferases. UMP can be transported back by an UDP-sugar antiporter to the cytosol where it is consumed to regenerate UDP-glucose. Therefore, it positively regulates protein reglucosylation by clearing UDP from the ER lumen and by promoting the regeneration of UDP-glucose. Protein reglucosylation is essential to proper glycoprotein folding and quality control in the ER. In Gallus gallus (Chicken), this protein is Ectonucleoside triphosphate diphosphohydrolase 5 (ENTPD5).